Consider the following 399-residue polypeptide: 4-hydroxy-3-methylbut-2-enyl diphosphate reductase (399 aa).

[4Fe-4S] cluster is bound at residue Cys-66. Residue His-96 coordinates (2E)-4-hydroxy-3-methylbut-2-enyl diphosphate. His-96 contacts dimethylallyl diphosphate. His-96 serves as a coordination point for isopentenyl diphosphate. Cys-157 lines the [4Fe-4S] cluster pocket. His-185 contacts (2E)-4-hydroxy-3-methylbut-2-enyl diphosphate. His-185 contributes to the dimethylallyl diphosphate binding site. Isopentenyl diphosphate is bound at residue His-185. The active-site Proton donor is the Glu-187. Thr-250 provides a ligand contact to (2E)-4-hydroxy-3-methylbut-2-enyl diphosphate. Residue Cys-288 participates in [4Fe-4S] cluster binding. The (2E)-4-hydroxy-3-methylbut-2-enyl diphosphate site is built by Ser-317, Ser-318, Asn-319, and Ser-380. Residues Ser-317, Ser-318, Asn-319, and Ser-380 each contribute to the dimethylallyl diphosphate site. Residues Ser-317, Ser-318, Asn-319, and Ser-380 each coordinate isopentenyl diphosphate.

Belongs to the IspH family. [4Fe-4S] cluster serves as cofactor.

It catalyses the reaction isopentenyl diphosphate + 2 oxidized [2Fe-2S]-[ferredoxin] + H2O = (2E)-4-hydroxy-3-methylbut-2-enyl diphosphate + 2 reduced [2Fe-2S]-[ferredoxin] + 2 H(+). It carries out the reaction dimethylallyl diphosphate + 2 oxidized [2Fe-2S]-[ferredoxin] + H2O = (2E)-4-hydroxy-3-methylbut-2-enyl diphosphate + 2 reduced [2Fe-2S]-[ferredoxin] + 2 H(+). It participates in isoprenoid biosynthesis; dimethylallyl diphosphate biosynthesis; dimethylallyl diphosphate from (2E)-4-hydroxy-3-methylbutenyl diphosphate: step 1/1. It functions in the pathway isoprenoid biosynthesis; isopentenyl diphosphate biosynthesis via DXP pathway; isopentenyl diphosphate from 1-deoxy-D-xylulose 5-phosphate: step 6/6. Catalyzes the conversion of 1-hydroxy-2-methyl-2-(E)-butenyl 4-diphosphate (HMBPP) into a mixture of isopentenyl diphosphate (IPP) and dimethylallyl diphosphate (DMAPP). Acts in the terminal step of the DOXP/MEP pathway for isoprenoid precursor biosynthesis. This Parasynechococcus marenigrum (strain WH8102) protein is 4-hydroxy-3-methylbut-2-enyl diphosphate reductase.